Consider the following 317-residue polypeptide: Proline iminopeptidase (317 aa).

An AB hydrolase-1 domain is found at valine 41 to histidine 296. Serine 113 functions as the Nucleophile in the catalytic mechanism. The active site involves aspartate 268. The active-site Proton donor is histidine 296.

Belongs to the peptidase S33 family. As to quaternary structure, monomer.

It localises to the cytoplasm. It catalyses the reaction Release of N-terminal proline from a peptide.. Specifically catalyzes the removal of N-terminal proline residues from peptides. The sequence is that of Proline iminopeptidase (pip) from Serratia marcescens.